The chain runs to 185 residues: MTASQEPVDQAPESNEPAPAVPATVEALQAELAAVRAELEAAQATVAGQQEQVLRARADAENVRRRAQEDVSKARKFGIESFAESLVPVKDSLEAALAQPDQTLEALREGVEVTLKQLTGAFERNLLKEIAPAQGDKFDPHLHQAISSVPSDQPANTVAQLLQKGYAIADRTLRPALVIVSAGQA.

Positions 1-22 (MTASQEPVDQAPESNEPAPAVP) are disordered.

Belongs to the GrpE family. Homodimer.

It localises to the cytoplasm. Its function is as follows. Participates actively in the response to hyperosmotic and heat shock by preventing the aggregation of stress-denatured proteins, in association with DnaK and GrpE. It is the nucleotide exchange factor for DnaK and may function as a thermosensor. Unfolded proteins bind initially to DnaJ; upon interaction with the DnaJ-bound protein, DnaK hydrolyzes its bound ATP, resulting in the formation of a stable complex. GrpE releases ADP from DnaK; ATP binding to DnaK triggers the release of the substrate protein, thus completing the reaction cycle. Several rounds of ATP-dependent interactions between DnaJ, DnaK and GrpE are required for fully efficient folding. This Bordetella petrii (strain ATCC BAA-461 / DSM 12804 / CCUG 43448) protein is Protein GrpE.